A 239-amino-acid chain; its full sequence is MSRLPQRRALVLLSGGQDSATCLAWALARYGHVETLGFDYGQRHRVELDCRQRLIDGVRALPWPGQLGPDHMLTVDVLAQLGGSAMTDDVAIAMQADGLPNTFVPGRNLLFFTLAAALAYRRGLDVLVGGMSETDYSGYPDCRDSTLKALQVALSLGVDRPLTLETPLMWRSKADTWALAQRLGGDALVELIRCESHTCYLGQRGDLHAWGHGCGGCPACELRAQGWEQWTAQRSLNGA.

13–23 is a binding site for ATP; it reads LSGGQDSATCL. Positions 199, 214, 217, and 220 each coordinate Zn(2+).

It belongs to the QueC family. It depends on Zn(2+) as a cofactor.

The enzyme catalyses 7-carboxy-7-deazaguanine + NH4(+) + ATP = 7-cyano-7-deazaguanine + ADP + phosphate + H2O + H(+). It participates in purine metabolism; 7-cyano-7-deazaguanine biosynthesis. In terms of biological role, catalyzes the ATP-dependent conversion of 7-carboxy-7-deazaguanine (CDG) to 7-cyano-7-deazaguanine (preQ(0)). The polypeptide is 7-cyano-7-deazaguanine synthase (Acidovorax ebreus (strain TPSY) (Diaphorobacter sp. (strain TPSY))).